Here is a 130-residue protein sequence, read N- to C-terminus: Small ribosomal subunit protein uS9 (130 aa).

The protein belongs to the universal ribosomal protein uS9 family.

This is Small ribosomal subunit protein uS9 from Marinobacter nauticus (strain ATCC 700491 / DSM 11845 / VT8) (Marinobacter aquaeolei).